We begin with the raw amino-acid sequence, 1081 residues long: Serine/threonine-protein kinase PKH2 (1081 aa).

Ser138 carries the post-translational modification Phosphoserine. The Protein kinase domain maps to 179–443 (FKFGSVIGDG…ISQIKEHHFF (265 aa)). ATP-binding positions include 189–191 (AYS) and Lys208. The PIF-pocket stretch occupies residues 210–255 (LNKEYLIRQKKVKYVSIEKTALQKLNNSPSVVRLFSTFQDESSLYF). ATP contacts are provided by residues 258–260 (EYA) and Asp264. Catalysis depends on Asp303, which acts as the Proton acceptor. Residues Glu307 and Asp321 each coordinate ATP. Positions 494-526 (HLVTQRSASSPSVEETTHSTLYNNNTHASTESE) are enriched in polar residues. Disordered regions lie at residues 494 to 652 (HLVT…TYQM), 805 to 833 (NRSGEGYKCNQNSSPMKDDDKSESNNKGS), and 970 to 1017 (IERR…INSA). A compositionally biased stretch (basic and acidic residues) spans 527 to 538 (ISIKKRPTDERT). Low complexity-rich tracts occupy residues 564-575 (AASAALAASAAL) and 582-602 (SYPTSSSKSSRSSSPATTSRP). Ser619 is subject to Phosphoserine. Over residues 632–645 (PMPPYTPPMSPPMT) the composition is skewed to pro residues. 2 stretches are compositionally biased toward polar residues: residues 805–819 (NRSGEGYKCNQNSSP) and 998–1017 (HSQSPSISKHNSFSESINSA). The residue at position 1009 (Ser1009) is a Phosphoserine.

It belongs to the protein kinase superfamily. AGC Ser/Thr protein kinase family. PDPK1 subfamily.

It is found in the nucleus. It localises to the cytoplasm. The protein localises to the cell cortex. The catalysed reaction is L-seryl-[protein] + ATP = O-phospho-L-seryl-[protein] + ADP + H(+). It carries out the reaction L-threonyl-[protein] + ATP = O-phospho-L-threonyl-[protein] + ADP + H(+). Sphingoid base activates kinase activity. In terms of biological role, serine/threonine-protein kinase which is part sphingolipid-mediated signaling pathway that is required for the internalization step of endocytosis by regulating eisosome assembly and organization, and modulating the organization of the plasma membrane. Phosphorylates and activates PKC1. Activates YPK1 and YPK2, 2 components of signaling cascade required for maintenance of cell wall integrity. Required for stress-induced P-body assembly and regulates global mRNA decay at the deadenylation step. This chain is Serine/threonine-protein kinase PKH2 (PKH2), found in Saccharomyces cerevisiae (strain ATCC 204508 / S288c) (Baker's yeast).